The sequence spans 346 residues: Holliday junction branch migration complex subunit RuvB (346 aa).

Positions 1–182 (MTRVISGEPQ…FGIPIRLEFY (182 aa)) are large ATPase domain (RuvB-L). Residues leucine 21, arginine 22, glycine 63, lysine 66, threonine 67, threonine 68, arginine 172, tyrosine 182, and arginine 219 each contribute to the ATP site. Threonine 67 contacts Mg(2+). Residues 183 to 253 (TPAELRHVLQ…AAAMALARLE (71 aa)) are small ATPAse domain (RuvB-S). Residues 256–346 (ESGLDSLDRR…QAQGALFDEG (91 aa)) are head domain (RuvB-H). Arginine 292, arginine 311, and arginine 316 together coordinate DNA.

Belongs to the RuvB family. As to quaternary structure, homohexamer. Forms an RuvA(8)-RuvB(12)-Holliday junction (HJ) complex. HJ DNA is sandwiched between 2 RuvA tetramers; dsDNA enters through RuvA and exits via RuvB. An RuvB hexamer assembles on each DNA strand where it exits the tetramer. Each RuvB hexamer is contacted by two RuvA subunits (via domain III) on 2 adjacent RuvB subunits; this complex drives branch migration. In the full resolvosome a probable DNA-RuvA(4)-RuvB(12)-RuvC(2) complex forms which resolves the HJ.

It is found in the cytoplasm. It carries out the reaction ATP + H2O = ADP + phosphate + H(+). Functionally, the RuvA-RuvB-RuvC complex processes Holliday junction (HJ) DNA during genetic recombination and DNA repair, while the RuvA-RuvB complex plays an important role in the rescue of blocked DNA replication forks via replication fork reversal (RFR). RuvA specifically binds to HJ cruciform DNA, conferring on it an open structure. The RuvB hexamer acts as an ATP-dependent pump, pulling dsDNA into and through the RuvAB complex. RuvB forms 2 homohexamers on either side of HJ DNA bound by 1 or 2 RuvA tetramers; 4 subunits per hexamer contact DNA at a time. Coordinated motions by a converter formed by DNA-disengaged RuvB subunits stimulates ATP hydrolysis and nucleotide exchange. Immobilization of the converter enables RuvB to convert the ATP-contained energy into a lever motion, pulling 2 nucleotides of DNA out of the RuvA tetramer per ATP hydrolyzed, thus driving DNA branch migration. The RuvB motors rotate together with the DNA substrate, which together with the progressing nucleotide cycle form the mechanistic basis for DNA recombination by continuous HJ branch migration. Branch migration allows RuvC to scan DNA until it finds its consensus sequence, where it cleaves and resolves cruciform DNA. This chain is Holliday junction branch migration complex subunit RuvB, found in Caulobacter vibrioides (strain ATCC 19089 / CIP 103742 / CB 15) (Caulobacter crescentus).